We begin with the raw amino-acid sequence, 249 residues long: 5'-nucleotidase SurE 2 (249 aa).

The a divalent metal cation site is built by aspartate 8, aspartate 9, serine 40, and asparagine 90.

This sequence belongs to the SurE nucleotidase family. The cofactor is a divalent metal cation.

It localises to the cytoplasm. It catalyses the reaction a ribonucleoside 5'-phosphate + H2O = a ribonucleoside + phosphate. In terms of biological role, nucleotidase that shows phosphatase activity on nucleoside 5'-monophosphates. In Pyrobaculum aerophilum (strain ATCC 51768 / DSM 7523 / JCM 9630 / CIP 104966 / NBRC 100827 / IM2), this protein is 5'-nucleotidase SurE 2.